The chain runs to 305 residues: Large ribosomal subunit protein uL2m (305 aa).

The transit peptide at 1–60 directs the protein to the mitochondrion; the sequence is MALCALTRALRSLNLAPPTVAAPAPSLFPAAQMMNNGLLQQPSALMLLPCRPVLTSVALN. Positions 264–283 are disordered; it reads RWLGKRPNSGRWHRKGGWAG. A compositionally biased stretch (basic residues) spans 274–283; that stretch reads RWHRKGGWAG.

Belongs to the universal ribosomal protein uL2 family. Component of the mitochondrial large ribosomal subunit (mt-LSU). Mature mammalian 55S mitochondrial ribosomes consist of a small (28S) and a large (39S) subunit. The 28S small subunit contains a 12S ribosomal RNA (12S mt-rRNA) and 30 different proteins. The 39S large subunit contains a 16S rRNA (16S mt-rRNA), a copy of mitochondrial valine transfer RNA (mt-tRNA(Val)), which plays an integral structural role, and 52 different proteins.

The protein localises to the mitochondrion. The protein is Large ribosomal subunit protein uL2m (MRPL2) of Homo sapiens (Human).